We begin with the raw amino-acid sequence, 638 residues long: Chaperone protein DnaK (638 aa).

At T198 the chain carries Phosphothreonine; by autocatalysis. Disordered regions lie at residues D539–D559 and Q602–K638. Basic and acidic residues predominate over residues G611–D623. Residues D624 to K638 are compositionally biased toward acidic residues.

The protein belongs to the heat shock protein 70 family.

Its function is as follows. Acts as a chaperone. The sequence is that of Chaperone protein DnaK from Shewanella frigidimarina (strain NCIMB 400).